Reading from the N-terminus, the 29-residue chain is DVDFNSESTRRKNKQKEIVDLHNSLKKTV.

This sequence belongs to the CRISP family. Post-translationally, contains 8 disulfide bonds. In terms of tissue distribution, expressed by the venom gland.

The protein localises to the secreted. This Naja haje haje (Egyptian cobra) protein is Cysteine-rich venom protein 25-A.